Reading from the N-terminus, the 560-residue chain is Membrane protein insertase YidC (560 aa).

The next 6 helical transmembrane spans lie at 7 to 27 (NLIA…YFVV), 334 to 354 (AIDF…MNFF), 357 to 377 (YVGN…LLMF), 431 to 451 (LPIL…YVTI), 476 to 496 (LFGF…WPIL), and 522 to 542 (FMPL…LIYW).

It belongs to the OXA1/ALB3/YidC family. Type 1 subfamily. In terms of assembly, interacts with the Sec translocase complex via SecD. Specifically interacts with transmembrane segments of nascent integral membrane proteins during membrane integration.

It localises to the cell inner membrane. Its function is as follows. Required for the insertion and/or proper folding and/or complex formation of integral membrane proteins into the membrane. Involved in integration of membrane proteins that insert both dependently and independently of the Sec translocase complex, as well as at least some lipoproteins. Aids folding of multispanning membrane proteins. In Rickettsia canadensis (strain McKiel), this protein is Membrane protein insertase YidC.